A 132-amino-acid polypeptide reads, in one-letter code: Small ribosomal subunit protein uS8c (132 aa).

It belongs to the universal ribosomal protein uS8 family. Part of the 30S ribosomal subunit.

Its subcellular location is the plastid. It is found in the chloroplast. Its function is as follows. One of the primary rRNA binding proteins, it binds directly to 16S rRNA central domain where it helps coordinate assembly of the platform of the 30S subunit. This is Small ribosomal subunit protein uS8c (rps8) from Ceratophyllum demersum (Rigid hornwort).